The chain runs to 325 residues: Ribosomal RNA small subunit methyltransferase H (325 aa).

S-adenosyl-L-methionine is bound by residues 32 to 34, aspartate 52, phenylalanine 79, aspartate 100, and glutamine 107; that span reads GGH.

Belongs to the methyltransferase superfamily. RsmH family.

The protein localises to the cytoplasm. It catalyses the reaction cytidine(1402) in 16S rRNA + S-adenosyl-L-methionine = N(4)-methylcytidine(1402) in 16S rRNA + S-adenosyl-L-homocysteine + H(+). Its function is as follows. Specifically methylates the N4 position of cytidine in position 1402 (C1402) of 16S rRNA. The chain is Ribosomal RNA small subunit methyltransferase H from Oceanobacillus iheyensis (strain DSM 14371 / CIP 107618 / JCM 11309 / KCTC 3954 / HTE831).